The chain runs to 149 residues: VapC ribonuclease PF0355 (149 aa).

The PINc domain occupies 8–122; that stretch reads TFDSLALIKM…ITDDSKRYEP (115 aa). Mg(2+) contacts are provided by D10 and D98.

The protein belongs to the PINc/VapC protein family. Mg(2+) serves as cofactor.

Its function is as follows. Toxic component of a type II toxin-antitoxin (TA) system. An RNase. This is VapC ribonuclease PF0355 from Pyrococcus furiosus (strain ATCC 43587 / DSM 3638 / JCM 8422 / Vc1).